Reading from the N-terminus, the 408-residue chain is Imidazolonepropionase (408 aa).

Residues His-73 and His-75 each coordinate Fe(3+). Zn(2+)-binding residues include His-73 and His-75. 3 residues coordinate 4-imidazolone-5-propanoate: Arg-82, Tyr-145, and His-178. Tyr-145 is an N-formimidoyl-L-glutamate binding site. Residue His-243 coordinates Fe(3+). His-243 is a Zn(2+) binding site. Gln-246 is a 4-imidazolone-5-propanoate binding site. Asp-318 serves as a coordination point for Fe(3+). Asp-318 is a binding site for Zn(2+). The N-formimidoyl-L-glutamate site is built by Asn-320 and Gly-322. A 4-imidazolone-5-propanoate-binding site is contributed by Ser-323.

The protein belongs to the metallo-dependent hydrolases superfamily. HutI family. Zn(2+) is required as a cofactor. It depends on Fe(3+) as a cofactor.

It is found in the cytoplasm. It catalyses the reaction 4-imidazolone-5-propanoate + H2O = N-formimidoyl-L-glutamate. The protein operates within amino-acid degradation; L-histidine degradation into L-glutamate; N-formimidoyl-L-glutamate from L-histidine: step 3/3. Catalyzes the hydrolytic cleavage of the carbon-nitrogen bond in imidazolone-5-propanoate to yield N-formimidoyl-L-glutamate. It is the third step in the universal histidine degradation pathway. The sequence is that of Imidazolonepropionase from Shewanella baltica (strain OS185).